Reading from the N-terminus, the 570-residue chain is GTPase Obg (570 aa).

In terms of domain architecture, Obg spans 2 to 168; sequence SDFVDRVTVH…RDIILELKSI (167 aa). A disordered region spans residues 15 to 43; that stretch reads GDGGNGSAGIRREKYKPLAGPNGGNGGKG. The 181-residue stretch at 169–349 folds into the OBG-type G domain; that stretch reads ADVALVGFPS…LNFALAKLVK (181 aa). Residues 175–182, 200–204, 221–224, 301–304, and 330–332 contribute to the GTP site; these read GFPSAGKS, FTTLV, DVPG, NKID, and STA. The Mg(2+) site is built by Ser182 and Thr202. The OCT domain maps to 382–468; the sequence is GRNAQVREFE…ERAVAFDWDP (87 aa). The tract at residues 521–570 is disordered; the sequence is RAAMQAERAAGHWADPSIDDDRHDEQSLFGRGEVEEYEDEPGADGSRQLD.

It belongs to the TRAFAC class OBG-HflX-like GTPase superfamily. OBG GTPase family. In terms of assembly, monomer. Mg(2+) is required as a cofactor.

Its subcellular location is the cytoplasm. Functionally, an essential GTPase which binds GTP, GDP and possibly (p)ppGpp with moderate affinity, with high nucleotide exchange rates and a fairly low GTP hydrolysis rate. Plays a role in control of the cell cycle, stress response, ribosome biogenesis and in those bacteria that undergo differentiation, in morphogenesis control. The protein is GTPase Obg of Bifidobacterium animalis subsp. lactis (strain AD011).